The chain runs to 343 residues: Aspartate carbamoyltransferase catalytic subunit (343 aa).

The carbamoyl phosphate site is built by R91 and T92. K119 serves as a coordination point for L-aspartate. Carbamoyl phosphate-binding residues include R141, H171, and Q174. Residues R204 and R259 each contribute to the L-aspartate site. Positions 300 and 301 each coordinate carbamoyl phosphate.

The protein belongs to the aspartate/ornithine carbamoyltransferase superfamily. ATCase family. In terms of assembly, heterododecamer (2C3:3R2) of six catalytic PyrB chains organized as two trimers (C3), and six regulatory PyrI chains organized as three dimers (R2).

The catalysed reaction is carbamoyl phosphate + L-aspartate = N-carbamoyl-L-aspartate + phosphate + H(+). The protein operates within pyrimidine metabolism; UMP biosynthesis via de novo pathway; (S)-dihydroorotate from bicarbonate: step 2/3. In terms of biological role, catalyzes the condensation of carbamoyl phosphate and aspartate to form carbamoyl aspartate and inorganic phosphate, the committed step in the de novo pyrimidine nucleotide biosynthesis pathway. The protein is Aspartate carbamoyltransferase catalytic subunit of Burkholderia multivorans (strain ATCC 17616 / 249).